We begin with the raw amino-acid sequence, 392 residues long: tRNA(Met) cytidine acetate ligase (392 aa).

Residues 7–20, glycine 101, asparagine 162, and 187–188 each bind ATP; these read VVEY…HQLH and RI.

This sequence belongs to the TmcAL family.

The protein localises to the cytoplasm. The catalysed reaction is cytidine(34) in elongator tRNA(Met) + acetate + ATP = N(4)-acetylcytidine(34) in elongator tRNA(Met) + AMP + diphosphate. Functionally, catalyzes the formation of N(4)-acetylcytidine (ac(4)C) at the wobble position of elongator tRNA(Met), using acetate and ATP as substrates. First activates an acetate ion to form acetyladenylate (Ac-AMP) and then transfers the acetyl group to tRNA to form ac(4)C34. The protein is tRNA(Met) cytidine acetate ligase of Listeria welshimeri serovar 6b (strain ATCC 35897 / DSM 20650 / CCUG 15529 / CIP 8149 / NCTC 11857 / SLCC 5334 / V8).